We begin with the raw amino-acid sequence, 428 residues long: Glycine reductase complex component B subunits alpha and beta (428 aa).

The Schiff-base intermediate with substrate; via pyruvic acid role is filled by C242. C242 is modified (pyruvic acid (Cys)).

Heterohexamer of two alpha, two beta and two gamma subunits. Component of the glycine reductase complex, together with components A and C. PB is substrate specific. In terms of processing, the peptide chain is cleaved into beta and alpha chains, and the alpha chain N-terminal cysteine is deaminated and oxidized to form a reactive pyruvoyl group.

It carries out the reaction acetyl phosphate + [thioredoxin]-disulfide + NH4(+) + H2O = [thioredoxin]-dithiol + glycine + phosphate + H(+). Its function is as follows. In the first step of glycine reductase, the substrate is bound to component PB via a Schiff base intermediate. Then the PB-activated substrate is nucleophilically attacked by the selenol anion of component PA to transform it to a carboxymethylated selenoether and the respective amine. By action of component PC, acetyl phosphate is formed, leaving component PA in its oxidized state. Finally component PA becomes reduced by the thioredoxin system to start a new catalytic cycle of reductive deamination. This Peptoclostridium acidaminophilum (Eubacterium acidaminophilum) protein is Glycine reductase complex component B subunits alpha and beta (grdE).